The chain runs to 682 residues: Potassium-transporting ATPase ATP-binding subunit (682 aa).

The next 4 membrane-spanning stretches (helical) occupy residues 34 to 54 (PVMFVVWAGSVLTTLLTLAMV), 58 to 78 (IAGSALFTGIISLWLWFTVLF), 219 to 239 (IALTILLIALTIVFLLATATL), and 254 to 274 (VLVALLVCLIPTTIGGLLSAI). Asp307 serves as the catalytic 4-aspartylphosphate intermediate. ATP-binding positions include Asp344, Glu348, 377-384 (FTAQSRMS), and Lys395. The Mg(2+) site is built by Asp518 and Asp522. Transmembrane regions (helical) follow at residues 588 to 608 (FAIIPAAFAATYPQLNALNVM), 616 to 636 (AILSAVIFNALIIIFLIPLAL), and 662 to 682 (LVVPFIGIKVIDVLLTLLGLA).

The protein belongs to the cation transport ATPase (P-type) (TC 3.A.3) family. Type IA subfamily. In terms of assembly, the system is composed of three essential subunits: KdpA, KdpB and KdpC.

The protein resides in the cell inner membrane. The enzyme catalyses K(+)(out) + ATP + H2O = K(+)(in) + ADP + phosphate + H(+). Part of the high-affinity ATP-driven potassium transport (or Kdp) system, which catalyzes the hydrolysis of ATP coupled with the electrogenic transport of potassium into the cytoplasm. This subunit is responsible for energy coupling to the transport system and for the release of the potassium ions to the cytoplasm. This Salmonella enteritidis PT4 (strain P125109) protein is Potassium-transporting ATPase ATP-binding subunit.